The chain runs to 95 residues: ESAT-6-like protein EsxH (95 aa).

This sequence belongs to the WXG100 family. ESAT-6 subfamily. In terms of assembly, forms a tight 1:1 complex with EsxG.

The protein resides in the secreted. The sequence is that of ESAT-6-like protein EsxH from Mycolicibacterium smegmatis (strain ATCC 700084 / mc(2)155) (Mycobacterium smegmatis).